A 166-amino-acid polypeptide reads, in one-letter code: Large ribosomal subunit protein mL49 (166 aa).

The protein belongs to the mitochondrion-specific ribosomal protein mL49 family. Component of the mitochondrial ribosome large subunit (39S) which comprises a 16S rRNA and about 50 distinct proteins. Interacts with OXA1L.

It localises to the mitochondrion. The sequence is that of Large ribosomal subunit protein mL49 (MRPL49) from Bos taurus (Bovine).